The following is a 430-amino-acid chain: Enolase (430 aa).

Q167 lines the (2R)-2-phosphoglycerate pocket. Catalysis depends on E209, which acts as the Proton donor. 3 residues coordinate Mg(2+): D245, E286, and D313. (2R)-2-phosphoglycerate contacts are provided by K338, R367, S368, and K389. K338 acts as the Proton acceptor in catalysis.

The protein belongs to the enolase family. Requires Mg(2+) as cofactor.

The protein resides in the cytoplasm. It is found in the secreted. The protein localises to the cell surface. It catalyses the reaction (2R)-2-phosphoglycerate = phosphoenolpyruvate + H2O. It functions in the pathway carbohydrate degradation; glycolysis; pyruvate from D-glyceraldehyde 3-phosphate: step 4/5. Its function is as follows. Catalyzes the reversible conversion of 2-phosphoglycerate (2-PG) into phosphoenolpyruvate (PEP). It is essential for the degradation of carbohydrates via glycolysis. This Parasynechococcus marenigrum (strain WH8102) protein is Enolase.